The sequence spans 174 residues: Gamma-crystallin C (174 aa).

Beta/gamma crystallin 'Greek key' domains lie at 2 to 40 (GKITFYEDRGFQGRCYQCSSDCPNLQPYFSRCNSIRVDS) and 41 to 83 (GCWM…CLIS). C23 is subject to S-methylcysteine. The connecting peptide stretch occupies residues 84–87 (DTSS). Beta/gamma crystallin 'Greek key' domains are found at residues 88–128 (HRLR…HVLE) and 129–171 (GCWV…RRVV).

This sequence belongs to the beta/gamma-crystallin family.

Functionally, crystallins are the dominant structural components of the vertebrate eye lens. The protein is Gamma-crystallin C (CRYGC) of Bos taurus (Bovine).